The following is a 155-amino-acid chain: MIKTRLARGGFSHRFIIKNMRYPVTLEPVEEGGYFVSFPDIPEALTQGDTREEALEMALDALITAFEFYFEDNEKIPLPGPVGQDYVDVPLSVASKVLMLNAFLDSKLTQIELANRMGVKKQEVTRIFDLRHSTKIDTVGKVASAIGHQLTLSIE.

Positions 99-153 (MLNAFLDSKLTQIELANRMGVKKQEVTRIFDLRHSTKIDTVGKVASAIGHQLTLS) constitute an HTH cro/C1-type domain. A DNA-binding region (H-T-H motif) is located at residues 110–129 (QIELANRMGVKKQEVTRIFD).

It belongs to the HicB antitoxin family. As to quaternary structure, probably forms a complex with the probable mRNA interferase HicA1 (its cognate toxin); when complexed with HicA 1 inhibits the toxin activity.

Functionally, antitoxin component of a type II toxin-antitoxin (TA) system. Functions as an mRNA interferase antitoxin preventing effects of the HicA 1 toxin. The polypeptide is Antitoxin HicB 1 (hicB1) (Photorhabdus laumondii subsp. laumondii (strain DSM 15139 / CIP 105565 / TT01) (Photorhabdus luminescens subsp. laumondii)).